The primary structure comprises 464 residues: Calcitonin gene-related peptide type 1 receptor (464 aa).

The signal sequence occupies residues 1-23 (MMDKKCTLCFLFLLLLNMALIAA). The Extracellular segment spans residues 24–139 (ESEEGANQTD…STHEKVKTAL (116 aa)). N-linked (GlcNAc...) asparagine glycosylation is found at N30, N66, N118, N123, N128, and N129. 3 disulfides stabilise this stretch: C48-C74, C65-C105, and C88-C127. A helical membrane pass occupies residues 140-164 (NLFYLTIIGHGLSIASLIISLIIFF). Topologically, residues 165 to 175 (YFKSLSCQRIT) are cytoplasmic. The helical transmembrane segment at 176–198 (LHKNLFFSFVCNSIVTIIHLTAV) threads the bilayer. Over 199–209 (ANNQALVATNP) the chain is Extracellular. The helical transmembrane segment at 210-238 (VSCKVSQFIHLYLMGCNYFWMLCEGIYLH) threads the bilayer. At 239 to 252 (TLIVVAVFAEKQHL) the chain is on the cytoplasmic side. A helical membrane pass occupies residues 253 to 273 (MWYYFLGWGFPLLPACIHAIA). Residues 274-289 (RSLYYNDNCWISSDTH) are Extracellular-facing. The segment at 288–289 (TH) is required for RAMP3 interaction. The chain crosses the membrane as a helical span at residues 290–314 (LLYIIHGPICAALLVNLFFLLNIVR). Residues 315–329 (VLITKLKVTHQAESN) are Cytoplasmic-facing. Residues 330–351 (LYMKAVRATLILVPLLGIEFVL) form a helical membrane-spanning segment. The Extracellular segment spans residues 352–366 (FPWRPEGKVAEEVYD). Residues 367-387 (YVMHILMHYQGLLVSTIFCFF) form a helical membrane-spanning segment. Residues 388–464 (NGEVQAILRR…KPEKMYDLVM (77 aa)) lie on the Cytoplasmic side of the membrane. Phosphoserine is present on residues S420 and S445.

Belongs to the G-protein coupled receptor 2 family. Heterodimer of CALCRL and RAMP1; the receptor complex functions as CGRP receptor. Heterodimer of CALCRL and RAMP2 or CALCRL and RAMP3; the complexes function as adrenomedullin receptor.

The protein localises to the cell membrane. In terms of biological role, g protein-coupled receptor which specificity is determined by its interaction with receptor-activity-modifying proteins (RAMPs). Together with RAMP1, form the receptor complex for calcitonin-gene-related peptides CALCA/CGRP1 and CALCB/CGRP2. Together with RAMP2 or RAMP3, function as receptor complexes for adrenomedullin (ADM and ADM2). Ligand binding causes a conformation change that triggers signaling via guanine nucleotide-binding proteins (G proteins) and modulates the activity of downstream effectors. Activates cAMP-dependent pathway. The chain is Calcitonin gene-related peptide type 1 receptor from Rattus norvegicus (Rat).